An 850-amino-acid polypeptide reads, in one-letter code: MAAAAPAAAAASSEAPAASATAEPEAGDQDSREVRVLQSLRGKICEAKNLLPYLGPHKMRDCFCTINLDQEEVYRTQVVEKSLSPFFSEEFYFEIPRTFQYLSFYVYDKNVLQRDLRIGKVAIKKEDLCNHSGKETWFSLQPVDSNSEVQGKVHLELKLNELITENGTVCQQLVVHIKACHGLPLINGQSCDPYATVSLVGPSRNDQKKTKVKKKTSNPQFNEIFYFEVTRSSSYTRKSQFQVEEEDIEKLEIRIDLWNNGNLVQDVFLGEIKVPVNVLRTDSSHQAWYLLQPRDNGNKSSKTDDLGSLRLNICYTEDYVLPSEYYGPLKTLLLKSPDVQPISASAAYILSEICRDKNDAVLPLVRLLLHHDKLVPFATAVAELDLKDTQDANTIFRGNSLATRCLDEMMKIVGGHYLKVTLKPILDEICDSSKSCEIDPIKLKEGDNVENNKENLRYYVDKLFNTIVKSSMSCPTVMCDIFYSLRQMATQRFPNDPHVQYSAVSSFVFLRFFAVAVVSPHTFHLRPHHPDAQTIRTLTLISKTIQTLGSWGSLSKSKSSFKETFMCEFFKMFQEEGYIIAVKKFLDEISSTETKESSGTSEPVHLKEGEMYKRAQGRTRIGKKNFKKRWFCLTSRELTYHKQPGSKDAIYTIPVKNILAVEKLEESSFNKKNMFQVIHTEKPLYVQANNCVEANEWIDVLCRVSRCNQNRLSFYHPSVYLNGNWLCCQETGENTLGCKPCTAGVPADIQIDIDEDRETERIYSLFTLSLLKLQKMEEACGTIAVYQGPQKEPDDYSNFVIEDSVTTFKTIQQIKSIIEKLDEPHEKYRKKRSSSAKYGSKENPIVGKAS.

Low complexity predominate over residues 1–24 (MAAAAPAAAAASSEAPAASATAEP). Positions 1 to 32 (MAAAAPAAAAASSEAPAASATAEPEAGDQDSR) are disordered. An N-acetylalanine modification is found at Ala2. 2 consecutive C2 domains span residues 20–138 (ATAE…ETWF) and 149–289 (VQGK…QAWY). Residues 372-589 (DKLVPFATAV…IAVKKFLDEI (218 aa)) enclose the Ras-GAP domain. A Phosphoserine modification is found at Ser555. The PH domain occupies 604–706 (VHLKEGEMYK…WIDVLCRVSR (103 aa)). The Btk-type zinc finger occupies 708–744 (NQNRLSFYHPSVYLNGNWLCCQETGENTLGCKPCTAG). Zn(2+) contacts are provided by His716, Cys727, Cys728, and Cys738. The disordered stretch occupies residues 825–850 (HEKYRKKRSSSAKYGSKENPIVGKAS).

It is found in the cytoplasm. Its subcellular location is the perinuclear region. Functionally, inhibitory regulator of the Ras-cyclic AMP pathway. Binds inositol tetrakisphosphate (IP4). This Homo sapiens (Human) protein is Ras GTPase-activating protein 2 (RASA2).